Consider the following 154-residue polypeptide: UPF0178 protein Gbem_2221 (154 aa).

It belongs to the UPF0178 family.

The chain is UPF0178 protein Gbem_2221 from Citrifermentans bemidjiense (strain ATCC BAA-1014 / DSM 16622 / JCM 12645 / Bem) (Geobacter bemidjiensis).